The sequence spans 478 residues: MAEVIKGRIVQVIGPVVDVEFEGVKELPRIKDGLKTIRRAIDDRGNWFEEVLFMEVAQHIGEHRVRAIAMGPTDGLVRGQEVEYLGGPIKIPVGKEVLGRIFNVAGQPIDEQGPVEAKEYWPMFRNPPELVEQSTKVEILETGIKVIDLLQPIIKGGKVGLFGGAGVGKTVLMQELIHNIARFHEGYSVVVGVGERTREGNDLWLEMKESGVLPYTVMVYGQMNEPPGVRFRVAHTGLTMAEYFRDVEGQDVLIFIDNIFRFVQAGSEVSTLLGRLPSAVGYQPTLNTDVGEVQERITSTKKGSITAIQAVYVPADDITDPAPWSIFAHLDATTVLTRRLAELGIYPAIDPLESTSKYLAPEYVGEEHYEVAMEVKRILQRYKELQEIIAILGMEELSEEDKAIVNRARRIQKFLSQPFHVAEQFTGMPGKYVKLEDTIRSFKEVLTGKYDHLPENAFYMVGTIEDAIEKAKQMGAKV.

163 to 170 contacts ATP; sequence GGAGVGKT.

This sequence belongs to the ATPase alpha/beta chains family. F-type ATPases have 2 components, CF(1) - the catalytic core - and CF(0) - the membrane proton channel. CF(1) has five subunits: alpha(3), beta(3), gamma(1), delta(1), epsilon(1). CF(0) has three main subunits: a(1), b(2) and c(9-12). The alpha and beta chains form an alternating ring which encloses part of the gamma chain. CF(1) is attached to CF(0) by a central stalk formed by the gamma and epsilon chains, while a peripheral stalk is formed by the delta and b chains.

It is found in the cell inner membrane. The enzyme catalyses ATP + H2O + 4 H(+)(in) = ADP + phosphate + 5 H(+)(out). Functionally, produces ATP from ADP in the presence of a proton gradient across the membrane. The catalytic sites are hosted primarily by the beta subunits. The polypeptide is ATP synthase subunit beta (Aquifex pyrophilus).